Reading from the N-terminus, the 440-residue chain is UPF0761 membrane protein Rru_A2625 (440 aa).

The next 7 membrane-spanning stretches (helical) occupy residues 29 to 49, 61 to 81, 117 to 137, 157 to 177, 201 to 221, 224 to 244, and 264 to 284; these read ILAT…THDI, LLAL…FPGF, GLTA…LLTI, LLVY…SFSL, PTLG…MLVP, PVPL…SALL, and ALAA…VVLM.

Belongs to the UPF0761 family.

Its subcellular location is the cell inner membrane. This Rhodospirillum rubrum (strain ATCC 11170 / ATH 1.1.1 / DSM 467 / LMG 4362 / NCIMB 8255 / S1) protein is UPF0761 membrane protein Rru_A2625.